We begin with the raw amino-acid sequence, 21 residues long: Alpha-aminoadipic semialdehyde dehydrogenase (21 aa).

It belongs to the aldehyde dehydrogenase family. Homotetramer.

The enzyme catalyses (S)-2-amino-6-oxohexanoate + NADP(+) + H2O = L-2-aminoadipate + NADPH + 2 H(+). The catalysed reaction is (S)-2-amino-6-oxohexanoate + NAD(+) + H2O = L-2-aminoadipate + NADH + 2 H(+). This is Alpha-aminoadipic semialdehyde dehydrogenase (aldh7a1) from Ctenopharyngodon idella (Grass carp).